Here is a 374-residue protein sequence, read N- to C-terminus: Type II methyltransferase M.BbvI (374 aa).

In terms of domain architecture, SAM-dependent MTase C5-type spans 3-347 (FRKGELFCGP…EAVLKTFARI (345 aa)). The active site involves C92.

This sequence belongs to the class I-like SAM-binding methyltransferase superfamily. C5-methyltransferase family.

It catalyses the reaction a 2'-deoxycytidine in DNA + S-adenosyl-L-methionine = a 5-methyl-2'-deoxycytidine in DNA + S-adenosyl-L-homocysteine + H(+). A methylase, recognizes the double-stranded sequence 5'-GCAGC-3', methylates C-2 on both strands, and protects the DNA from cleavage by the BbvI endonuclease. The sequence is that of Type II methyltransferase M.BbvI (bbvIM) from Brevibacillus brevis (Bacillus brevis).